Here is a 157-residue protein sequence, read N- to C-terminus: Phosphopantetheine adenylyltransferase (157 aa).

S9 serves as a coordination point for substrate. ATP-binding positions include 9 to 10 (SF) and H17. 3 residues coordinate substrate: K41, L73, and K87. ATP is bound by residues 88 to 90 (GLR), E98, and 123 to 129 (YSFLSSS).

The protein belongs to the bacterial CoaD family. In terms of assembly, homohexamer. The cofactor is Mg(2+).

It localises to the cytoplasm. The enzyme catalyses (R)-4'-phosphopantetheine + ATP + H(+) = 3'-dephospho-CoA + diphosphate. The protein operates within cofactor biosynthesis; coenzyme A biosynthesis; CoA from (R)-pantothenate: step 4/5. Reversibly transfers an adenylyl group from ATP to 4'-phosphopantetheine, yielding dephospho-CoA (dPCoA) and pyrophosphate. This is Phosphopantetheine adenylyltransferase from Alkaliphilus oremlandii (strain OhILAs) (Clostridium oremlandii (strain OhILAs)).